A 481-amino-acid polypeptide reads, in one-letter code: Tripartite motif-containing protein 10 (481 aa).

The segment at 16–61 adopts an RING-type zinc-finger fold; that stretch reads CPICQGTLREPVTIDCGHNFCRACLTRYCEIPGPDLEESPTCPLCK. Residues 94 to 135 form a B box-type zinc finger; that stretch reads GEEDVCQEHGEKIYFFCEDDEMQLCVVCREAGEHATHTMRFL. 4 residues coordinate Zn(2+): cysteine 99, histidine 102, cysteine 121, and histidine 127. The stretch at 150–177 forms a coiled coil; that stretch reads LKCLRKEREEIQEIQSRENKRMQVLLTQ. Positions 292–481 constitute a B30.2/SPRY domain; the sequence is REMKMFLEKL…GRGSSFSLSS (190 aa).

This sequence belongs to the TRIM/RBCC family. Interacts with IFNAR1; this interaction prevents association of IFNAR1 with TYK2.

The protein resides in the cytoplasm. Functionally, E3 ligase that plays an essential role in the differentiation and survival of terminal erythroid cells. May directly bind to PTEN and promote its ubiquitination, resulting in its proteasomal degradation and activation of hypertrophic signaling. In addition, plays a role in immune response regulation by repressing the phosphorylation of STAT1 and STAT2 in the interferon/JAK/STAT signaling pathway independent of its E3 ligase activity. Mechanistically, interacts with the intracellular domain of IFNAR1 and thereby inhibits the association between TYK2 and IFNAR1. This chain is Tripartite motif-containing protein 10 (TRIM10), found in Homo sapiens (Human).